Consider the following 99-residue polypeptide: uncharacterized protein (99 aa).

This is an uncharacterized protein from Lepidoptera (butterflies and moths).